Here is a 702-residue protein sequence, read N- to C-terminus: Methionine--tRNA ligase (702 aa).

The short motif at 14 to 24 is the 'HIGH' region element; the sequence is PYANGPVHLGH. Cys-146, Cys-149, Cys-159, and Cys-162 together coordinate Zn(2+). The 'KMSKS' region signature appears at 344–348; the sequence is KFSKS. Lys-347 serves as a coordination point for ATP. Positions 601–702 constitute a tRNA-binding domain; sequence DFQKVDLRVA…GEKINGQSVQ (102 aa).

It belongs to the class-I aminoacyl-tRNA synthetase family. MetG type 1 subfamily. As to quaternary structure, homodimer. Zn(2+) serves as cofactor.

It localises to the cytoplasm. The catalysed reaction is tRNA(Met) + L-methionine + ATP = L-methionyl-tRNA(Met) + AMP + diphosphate. Its function is as follows. Is required not only for elongation of protein synthesis but also for the initiation of all mRNA translation through initiator tRNA(fMet) aminoacylation. The sequence is that of Methionine--tRNA ligase from Chlorobium luteolum (strain DSM 273 / BCRC 81028 / 2530) (Pelodictyon luteolum).